Reading from the N-terminus, the 394-residue chain is 8-amino-7-oxononanoate synthase (394 aa).

Arg-21 contacts substrate. 112–113 provides a ligand contact to pyridoxal 5'-phosphate; it reads GY. Position 137 (His-137) interacts with substrate. 3 residues coordinate pyridoxal 5'-phosphate: Ser-183, His-211, and Thr-239. The residue at position 242 (Lys-242) is an N6-(pyridoxal phosphate)lysine. Thr-358 serves as a coordination point for substrate.

The protein belongs to the class-II pyridoxal-phosphate-dependent aminotransferase family. BioF subfamily. In terms of assembly, homodimer. Pyridoxal 5'-phosphate is required as a cofactor.

It carries out the reaction 6-carboxyhexanoyl-[ACP] + L-alanine + H(+) = (8S)-8-amino-7-oxononanoate + holo-[ACP] + CO2. The protein operates within cofactor biosynthesis; biotin biosynthesis. Its function is as follows. Catalyzes the decarboxylative condensation of pimeloyl-[acyl-carrier protein] and L-alanine to produce 8-amino-7-oxononanoate (AON), [acyl-carrier protein], and carbon dioxide. The polypeptide is 8-amino-7-oxononanoate synthase (Burkholderia pseudomallei (strain K96243)).